The sequence spans 726 residues: Catalase-peroxidase (726 aa).

Positions 1–33 (MSTTDDTHNTLSTGKCPFHQGGHDRSAGAGTAS) are disordered. Residues 105-226 (WHGAGTYRSI…LGATEMGLIY (122 aa)) constitute a cross-link (tryptophyl-tyrosyl-methioninium (Trp-Tyr) (with M-252)). Residue histidine 106 is the Proton acceptor of the active site. Positions 226-252 (YVNPEGPDHSGEPLSAAAAIRATFGNM) form a cross-link, tryptophyl-tyrosyl-methioninium (Tyr-Met) (with W-105). Heme b is bound at residue histidine 267.

The protein belongs to the peroxidase family. Peroxidase/catalase subfamily. Homodimer or homotetramer. Requires heme b as cofactor. In terms of processing, formation of the three residue Trp-Tyr-Met cross-link is important for the catalase, but not the peroxidase activity of the enzyme.

The catalysed reaction is H2O2 + AH2 = A + 2 H2O. It carries out the reaction 2 H2O2 = O2 + 2 H2O. Bifunctional enzyme with both catalase and broad-spectrum peroxidase activity. The polypeptide is Catalase-peroxidase (Salmonella heidelberg (strain SL476)).